The following is a 608-amino-acid chain: 2',5'-phosphodiesterase 12 (608 aa).

A mitochondrion-targeting transit peptide spans 1 to 16; the sequence is MWRLPGRAALRGVRSV. A disordered region spans residues 91 to 111; it reads AKKSRKNRAHSSGGAACAATG. Low complexity predominate over residues 100 to 111; it reads HSSGGAACAATG. Ser216 carries the phosphoserine modification. Mg(2+) contacts are provided by Glu350, Asp495, and Asn497. Asp495 functions as the Proton donor/acceptor in the catalytic mechanism.

It belongs to the CCR4/nocturin family. The cofactor is Mg(2+).

Its subcellular location is the mitochondrion matrix. It catalyses the reaction Exonucleolytic cleavage of poly(A) to 5'-AMP.. Enzyme that cleaves 2',5'-phosphodiester bond linking adenosines of the 5'-triphosphorylated oligoadenylates, triphosphorylated oligoadenylates referred as 2-5A modulates the 2-5A system. Degrades triphosphorylated 2-5A to produce AMP and ATP. Also cleaves 3',5'-phosphodiester bond of oligoadenylates. Plays a role as a negative regulator of the 2-5A system that is one of the major pathways for antiviral and antitumor functions induced by interferons (IFNs). Suppression of this enzyme increases cellular 2-5A levels and decreases viral replication in cultured small-airway epithelial cells. This is 2',5'-phosphodiesterase 12 (Pde12) from Rattus norvegicus (Rat).